A 255-amino-acid chain; its full sequence is Leucyl/phenylalanyl-tRNA--protein transferase (255 aa).

This sequence belongs to the L/F-transferase family.

It localises to the cytoplasm. The catalysed reaction is N-terminal L-lysyl-[protein] + L-leucyl-tRNA(Leu) = N-terminal L-leucyl-L-lysyl-[protein] + tRNA(Leu) + H(+). It carries out the reaction N-terminal L-arginyl-[protein] + L-leucyl-tRNA(Leu) = N-terminal L-leucyl-L-arginyl-[protein] + tRNA(Leu) + H(+). The enzyme catalyses L-phenylalanyl-tRNA(Phe) + an N-terminal L-alpha-aminoacyl-[protein] = an N-terminal L-phenylalanyl-L-alpha-aminoacyl-[protein] + tRNA(Phe). Functions in the N-end rule pathway of protein degradation where it conjugates Leu, Phe and, less efficiently, Met from aminoacyl-tRNAs to the N-termini of proteins containing an N-terminal arginine or lysine. The protein is Leucyl/phenylalanyl-tRNA--protein transferase of Burkholderia thailandensis (strain ATCC 700388 / DSM 13276 / CCUG 48851 / CIP 106301 / E264).